The following is a 215-amino-acid chain: Sperm acrosome membrane-associated protein 3 (215 aa).

At 1–63 (MVSALRGAPL…EARSRALRRR (63 aa)) the chain is on the cytoplasmic side. Residues 64-84 (WCPAGIMLLALVCLLSCLLPS) form a helical; Signal-anchor for type II membrane protein membrane-spanning segment. At 85 to 215 (SEAKLYGRCE…LTEWVDGCDF (131 aa)) the chain is on the extracellular side. The C-type lysozyme domain maps to 88-215 (KLYGRCELAR…LTEWVDGCDF (128 aa)). 4 disulfides stabilise this stretch: cysteine 93–cysteine 213, cysteine 117–cysteine 201, cysteine 151–cysteine 166, and cysteine 162–cysteine 180.

It belongs to the glycosyl hydrolase 22 family. In terms of assembly, interacts with ASTL. In terms of processing, the processed form derives from the membrane form by proteolytic processing. In terms of tissue distribution, the processed form is expressed in sperm (at protein level). Expressed in testis, epididymis and placenta.

It localises to the cytoplasmic vesicle. Its subcellular location is the secretory vesicle. The protein localises to the acrosome membrane. The protein resides in the secreted. In terms of biological role, sperm surface membrane protein that may be involved in sperm-egg plasma membrane adhesion and fusion during fertilization. It could be a potential receptor for the egg oligosaccharide residue N-acetylglucosamine, which is present in the extracellular matrix over the egg plasma membrane. The processed form has no detectable bacteriolytic activity in vitro. The protein is Sperm acrosome membrane-associated protein 3 (SPACA3) of Homo sapiens (Human).